The chain runs to 418 residues: MDRIRIRGGRPLEGVIDISGAKNSALKVMVAGLLTDERLELENVPALADVATMAQLLAQHGIAVEETGAKQLSVGGAITNTEAPYDIVRKMRASILVLGPLLARTGEARVSLPGGCAIGTRPVDLHLKGLEAMGAEIALDGGYINARAPKGLHGATITFPFVSVGATEQLLLTATLAEGETVLVNAAREPEIGDLADCLNKMGADISGIGSDRLTIRGVKALHGARHTILPDRIEAGTYACAAAITGGGVLLRGARMFDLGALASTLGEAGVDVTEVAEGVTVSRRNGLHGTDAMTEPFPGFVTDMQAQFMTLMAVAEGASMITETIFENRFMHVPELNRMGARINVHGSSAIVRGVPGLSGAPVMATDLRASFSLVLAGLAAKGETIVNRVYHLDRGYEAVERKLAACGADIERLRD.

Position 22–23 (22–23 (KN)) interacts with phosphoenolpyruvate. R92 provides a ligand contact to UDP-N-acetyl-alpha-D-glucosamine. C116 acts as the Proton donor in catalysis. C116 bears the 2-(S-cysteinyl)pyruvic acid O-phosphothioketal mark. UDP-N-acetyl-alpha-D-glucosamine contacts are provided by residues 121–125 (RPVDL), D305, and I327.

Belongs to the EPSP synthase family. MurA subfamily.

The protein localises to the cytoplasm. It catalyses the reaction phosphoenolpyruvate + UDP-N-acetyl-alpha-D-glucosamine = UDP-N-acetyl-3-O-(1-carboxyvinyl)-alpha-D-glucosamine + phosphate. Its pathway is cell wall biogenesis; peptidoglycan biosynthesis. Cell wall formation. Adds enolpyruvyl to UDP-N-acetylglucosamine. The protein is UDP-N-acetylglucosamine 1-carboxyvinyltransferase of Acidiphilium cryptum (strain JF-5).